The following is a 1408-amino-acid chain: DNA-directed RNA polymerase subunit beta' (1408 aa).

Zn(2+)-binding residues include Cys70, Cys72, Cys85, and Cys88. The Mg(2+) site is built by Asp460, Asp462, and Asp464. The Zn(2+) site is built by Cys822, Cys896, Cys903, and Cys906. The disordered stretch occupies residues 1386 to 1408; the sequence is DTGEAPPLSEEETGEIRNSGYAV.

The protein belongs to the RNA polymerase beta' chain family. In terms of assembly, the RNAP catalytic core consists of 2 alpha, 1 beta, 1 beta' and 1 omega subunit. When a sigma factor is associated with the core the holoenzyme is formed, which can initiate transcription. Requires Mg(2+) as cofactor. The cofactor is Zn(2+).

The catalysed reaction is RNA(n) + a ribonucleoside 5'-triphosphate = RNA(n+1) + diphosphate. Functionally, DNA-dependent RNA polymerase catalyzes the transcription of DNA into RNA using the four ribonucleoside triphosphates as substrates. This Nitrosospira multiformis (strain ATCC 25196 / NCIMB 11849 / C 71) protein is DNA-directed RNA polymerase subunit beta'.